A 388-amino-acid chain; its full sequence is Granulocyte-macrophage colony-stimulating factor receptor subunit alpha (388 aa).

An N-terminal signal peptide occupies residues 1–29 (MTSSHAMNITPLAQLALLFSTLLLPGTQA). Over 30 to 327 (LLAPTTPDAG…PLEAEDTRVP (298 aa)) the chain is Extracellular. 6 N-linked (GlcNAc...) asparagine glycosylation sites follow: N43, N63, N106, N132, N165, and N237. Residues 228-324 (PPRDVTASCN…PAHPLEAEDT (97 aa)) form the Fibronectin type-III domain. Residues 310-314 (WGEWS) carry the WSXWS motif motif. Residues 328 to 348 (GALLYAVTACAVLLCALALGV) form a helical membrane-spanning segment. Residues 349-388 (TCRRFEVTRRLFPPIPGIRDKVSDDVRVNPETLRKDLLQP) are Cytoplasmic-facing. A Box 1 motif motif is present at residues 359–367 (LFPPIPGIR).

It belongs to the type I cytokine receptor family. Type 5 subfamily. Heterodimer of an alpha and a beta subunit. The beta subunit is common to the IL3, IL5 and GM-CSF receptors. The signaling GM-CSF receptor complex is a dodecamer of two head-to-head hexamers of two alpha, two beta, and two ligand subunits.

The protein localises to the membrane. In terms of biological role, low affinity receptor for granulocyte-macrophage colony-stimulating factor. Transduces a signal that results in the proliferation, differentiation, and functional activation of hematopoietic cells. The protein is Granulocyte-macrophage colony-stimulating factor receptor subunit alpha (Csf2ra) of Mus musculus (Mouse).